The sequence spans 246 residues: NAD-dependent protein deacetylase (246 aa).

The region spanning 1-246 (MKMKEFLDLL…RRVMEEGGIS (246 aa)) is the Deacetylase sirtuin-type domain. NAD(+) contacts are provided by Ala-22, Thr-26, Phe-33, Arg-34, Gln-98, Ile-100, Asp-101, and His-116. Phe-33 is a nicotinamide binding site. The nicotinamide site is built by Ile-100 and Asp-101. The Proton acceptor role is filled by His-116. The Zn(2+) site is built by Cys-124, Cys-127, Cys-148, and Cys-151. NAD(+) contacts are provided by Ser-189, Ser-190, Asn-214, Leu-215, Gly-216, Asp-231, and Val-232.

The protein belongs to the sirtuin family. Class U subfamily. The cofactor is Zn(2+).

It is found in the cytoplasm. The enzyme catalyses N(6)-acetyl-L-lysyl-[protein] + NAD(+) + H2O = 2''-O-acetyl-ADP-D-ribose + nicotinamide + L-lysyl-[protein]. Non-competitively inhibited by nicotinamide in vitro and in vivo, but not by nicotinic acid. Nicotinamide inhibits the deacetylation activity by reacting with a reaction intermediate. NAD-dependent protein deacetylase which modulates the activities of several enzymes which are inactive in their acetylated form. Also has depropionylation activity in vitro. Also able to ADP-ribosylate peptide substrates with Arg or Lys in the +2 position. The role of this function in vivo is not clear. This chain is NAD-dependent protein deacetylase, found in Thermotoga maritima (strain ATCC 43589 / DSM 3109 / JCM 10099 / NBRC 100826 / MSB8).